A 159-amino-acid polypeptide reads, in one-letter code: Putative pre-16S rRNA nuclease (159 aa).

It belongs to the YqgF nuclease family.

The protein resides in the cytoplasm. Functionally, could be a nuclease involved in processing of the 5'-end of pre-16S rRNA. In Synechococcus sp. (strain JA-3-3Ab) (Cyanobacteria bacterium Yellowstone A-Prime), this protein is Putative pre-16S rRNA nuclease.